Reading from the N-terminus, the 190-residue chain is Small ribosomal subunit protein uS5 (190 aa).

Residues 19 to 82 form the S5 DRBM domain; the sequence is IIDKLVTINR…ERAKRSMIRV (64 aa). The tract at residues 161–190 is disordered; the sequence is SVASRRGKKVSDILGRREPVAGQEGEEAHA. The segment covering 169-179 has biased composition (basic and acidic residues); the sequence is KVSDILGRREP.

The protein belongs to the universal ribosomal protein uS5 family. As to quaternary structure, part of the 30S ribosomal subunit. Contacts proteins S4 and S8.

In terms of biological role, with S4 and S12 plays an important role in translational accuracy. Its function is as follows. Located at the back of the 30S subunit body where it stabilizes the conformation of the head with respect to the body. The sequence is that of Small ribosomal subunit protein uS5 from Granulibacter bethesdensis (strain ATCC BAA-1260 / CGDNIH1).